A 477-amino-acid polypeptide reads, in one-letter code: Homeobox protein Meis2 (477 aa).

Positions 71–191 (DALKRDKDAI…KMPIDLVIDE (121 aa)) are required for interaction with PBX1. The MEIS N-terminal domain occupies 110–193 (GGDVCSSDSF…PIDLVIDERD (84 aa)). A compositionally biased stretch (basic and acidic residues) spans 193–203 (DGSSKSDHEEL). A disordered region spans residues 193 to 283 (DGSSKSDHEE…KKRQKKRGIF (91 aa)). 2 stretches are compositionally biased toward polar residues: residues 204–217 (SGSSTNLADHNPSS) and 239–251 (GHASQSGDNSSEQ). The segment at residues 276-338 (RQKKRGIFPK…NARRRIVQPM (63 aa)) is a DNA-binding region (homeobox; TALE-type). Positions 299–333 (LTHPYPSEEQKKQLAQDTGLTILQVNNWFINARRR) are interaction with DNA. Residues 340–477 (DQSNRAGFLL…GGQVMDIHAQ (138 aa)) are transcriptional activation domain.

Belongs to the TALE/MEIS homeobox family. Monomer and homodimer. Heterodimer with HOXB13. Isoform Meis2A interacts with TLX1. Isoform Meis2B interacts with HOXA13 and PBX1 isoform PBX1b. Isoform Meis2D interacts with SP1, SP3 and KLF4. Isoform Meis2D interacts with PBX1 isoform PBX1a; the interaction partially relieves MEIS2 autoinhibition. Isoform Meis2B is part of a PDX1:PBX1b:MEIS2b complex; Meis2B is recruited by PBX1b and can be replaced by isoform Meis2D in a small fraction of complexes. Can form trimeric complexes including HOXB8 and PBX2 or PBX3. As to expression, displays spatially restricted expression patterns in the developing nervous system, limbs, face, and in various viscera. In adult, it is mainly expressed in the brain and female genital tract, with a different distribution of the alternative splice forms in these organs. Lower expression in lung and only basal level in heart, liver, kidney, spleen, and testis. Expressed in pancreatic islets (beta-cells only).

Its subcellular location is the nucleus. The protein localises to the cytoplasm. It is found in the perinuclear region. Its function is as follows. Involved in transcriptional regulation. Binds to HOX or PBX proteins to form dimers, or to a DNA-bound dimer of PBX and HOX proteins and thought to have a role in stabilization of the homeoprotein-DNA complex. Isoform Meis2B is required for the activity of a PDX1:PBX1b:MEIS2b complex in pancreatic acinar cells involved in the transcriptional activation of the ELA1 enhancer; the complex binds to the enhancer B element and cooperates with the transcription factor 1 complex (PTF1) bound to the enhancer A element; MEIS2 is not involved in complex DNA-binding. Probably in complex with PBX1, is involved in transcriptional regulation by KLF4. Isoforms Meis2B and Meis2D can bind to a EPHA8 promoter sequence containing the DNA motif 5'-CGGTCA-3'; in cooperation with a PBX protein (such as PBX2) is proposed to be involved in the transcriptional activation of EPHA8 in the developing midbrain. May be involved in regulation of myeloid differentiation. Can bind to the DNA sequence 5'-TGACAG-3'in the activator ACT sequence of the D(1A) dopamine receptor (DRD1) promoter and activate DRD1 transcription. The polypeptide is Homeobox protein Meis2 (Meis2) (Mus musculus (Mouse)).